Consider the following 361-residue polypeptide: 5-formaminoimidazole-4-carboxamide-1-(beta)-D-ribofuranosyl 5'-monophosphate synthetase (361 aa).

2 residues coordinate 5-amino-1-(5-phospho-beta-D-ribosyl)imidazole-4-carboxamide: histidine 27 and serine 94. Positions 116-348 (RAILRWEAER…MGQRIAREIK (233 aa)) constitute an ATP-grasp domain. ATP is bound by residues 146-208 (PDDI…ANYC) and glutamate 230. 5-amino-1-(5-phospho-beta-D-ribosyl)imidazole-4-carboxamide is bound at residue asparagine 258. Positions 297 and 310 each coordinate Mg(2+).

It belongs to the phosphohexose mutase family. It depends on Mg(2+) as a cofactor. Requires Mn(2+) as cofactor.

It carries out the reaction 5-amino-1-(5-phospho-beta-D-ribosyl)imidazole-4-carboxamide + formate + ATP = 5-formamido-1-(5-phospho-D-ribosyl)imidazole-4-carboxamide + ADP + phosphate. It participates in purine metabolism; IMP biosynthesis via de novo pathway; 5-formamido-1-(5-phospho-D-ribosyl)imidazole-4-carboxamide from 5-amino-1-(5-phospho-D-ribosyl)imidazole-4-carboxamide (formate route): step 1/1. Functionally, catalyzes the ATP- and formate-dependent formylation of 5-aminoimidazole-4-carboxamide-1-beta-d-ribofuranosyl 5'-monophosphate (AICAR) to 5-formaminoimidazole-4-carboxamide-1-beta-d-ribofuranosyl 5'-monophosphate (FAICAR) in the absence of folates. This chain is 5-formaminoimidazole-4-carboxamide-1-(beta)-D-ribofuranosyl 5'-monophosphate synthetase, found in Methanococcus maripaludis (strain C7 / ATCC BAA-1331).